A 460-amino-acid polypeptide reads, in one-letter code: Cysteine--tRNA ligase (460 aa).

Cysteine 27 contacts Zn(2+). The 'HIGH' region motif lies at 29–39 (PTVYDLIHVGN). Residues cysteine 207, histidine 232, and glutamate 236 each coordinate Zn(2+). Residues 264–268 (KMSKS) carry the 'KMSKS' region motif. Lysine 267 is an ATP binding site.

Belongs to the class-I aminoacyl-tRNA synthetase family. Monomer. The cofactor is Zn(2+).

The protein localises to the cytoplasm. The catalysed reaction is tRNA(Cys) + L-cysteine + ATP = L-cysteinyl-tRNA(Cys) + AMP + diphosphate. This Thermotoga maritima (strain ATCC 43589 / DSM 3109 / JCM 10099 / NBRC 100826 / MSB8) protein is Cysteine--tRNA ligase (cysS).